Consider the following 367-residue polypeptide: Biotin--protein ligase 1, chloroplastic (367 aa).

The transit peptide at 1–37 (MEAVRSTTTLSNFHLLNILVLRSLKPLHRLSFSFSAS) directs the protein to the chloroplast. The 185-residue stretch at 105-289 (IITHRFGRFL…KFEKFFDLFM (185 aa)) folds into the BPL/LPL catalytic domain. Biotin is bound by residues 122–124 (STH), Gln-145, 149–151 (RGR), and Lys-220.

Belongs to the biotin--protein ligase family. As to expression, expressed in roots, leaves, stems, flowers, siliques and seeds.

The protein localises to the plastid. It localises to the chloroplast. Its subcellular location is the cytoplasm. It is found in the cytosol. The enzyme catalyses apo-[3-methylcrotonoyl-CoA:carbon-dioxide ligase (ADP-forming)] + biotin + ATP = holo-[3-methylcrotonoyl-CoA:carbon-dioxide ligase (ADP-forming)] + AMP + diphosphate + H(+). It catalyses the reaction biotin + L-lysyl-[protein] + ATP = N(6)-biotinyl-L-lysyl-[protein] + AMP + diphosphate + H(+). Plays a major role in biotin-dependent carboxylase biotinylation. Catalyzes the addition of biotin to the biotin carboxyl carrier protein (BCCP) subunit of acetyl-CoA carboxylase. Can also biotinylate methylcrotonyl-CoA carboxylase. Is responsible for most, if not all, biotin--protein ligase activity in Arabidopsis. Is essential for plant viability and required for ovule development. In Arabidopsis thaliana (Mouse-ear cress), this protein is Biotin--protein ligase 1, chloroplastic.